A 432-amino-acid polypeptide reads, in one-letter code: MSIQAPRGFNDILPGEQYGWRDSYRWQRLEEIFREVARLYGYQELRPPMVEYVDLFIHGVGATTDIVTKEMFNITPRGDDPDARRMAMRPEFTAGLVRAWLENGLYNNPQPTKIFAYGPAFRYENVQKGRFRGFHQLDVEVFGAQDPAVDAEVIKLGLDVVARLGLTGLVVSVNSIGCPQCRPRYRQALQDHFRPHLGELCEDCNTRFEKNPLRLLDCKRDADHPAQRTAPVTLDYLCDDCRRHWEGLLSHLAAMGIPYQIDTRIVRGLDYYTKTVFEVLHPKLGAQSALWGGGRYDGLIEIVGGKPTPGVGFGMGMERVLMVLEEEGLTAPFADRPRLDVFVATLGEAARPVGLKLLYALRDAGLSADIDYLGRSLKAQMKYAGKQNSRYVVILGEDEVRQGVASVKHMDEGTQESVPLDQIISHLRRAEA.

The protein belongs to the class-II aminoacyl-tRNA synthetase family. As to quaternary structure, homodimer.

It localises to the cytoplasm. The enzyme catalyses tRNA(His) + L-histidine + ATP = L-histidyl-tRNA(His) + AMP + diphosphate + H(+). The sequence is that of Histidine--tRNA ligase from Symbiobacterium thermophilum (strain DSM 24528 / JCM 14929 / IAM 14863 / T).